We begin with the raw amino-acid sequence, 410 residues long: MVLTARQQEELQLAVHAYLVEAGHAEAAAAMAKSANLGDDAGDAKYTGLLEKKWTTITRLQKRNMELQAEVEELRSSARAPRSRTTTKMEEWVPRPPATVAVDGHRLPITAVAIHPSFAVMASASEDASIKLWDMESGNFERSLKGHTNAVNDIAYDREGNRLVSCSTDMTIKVWNMDNFTCTKTLSGHDHTVSSVRFDHTGDRVFSASRDKTIKIWELATGYCLQTLQGHSDWVRSIDVSADGAWICSASSDHTVRVWSVASGECKHVWSDHEHVVEHASFAPLVAHEALNLMIFGSKPSAEAASKGPFVASASRDKSICLFDVSTGQHLARLTGHDNWVRATAWSRGGRYLFSVADDKTMRVWDIATKRVSKTIPAHNHFVSCIAVHAKNTHVVTGSVDLKVKVWECN.

The 33-residue stretch at 7–39 folds into the LisH domain; sequence QQEELQLAVHAYLVEAGHAEAAAAMAKSANLGD. Residues 55–80 adopt a coiled-coil conformation; sequence TTITRLQKRNMELQAEVEELRSSARA. 7 WD repeats span residues 104–143, 146–185, 188–227, 230–269, 294–333, 336–375, and 378–410; these read GHRL…FERS, GHTN…CTKT, GHDH…CLQT, GHSD…CKHV, MIFG…HLAR, GHDN…VSKT, and AHNH…WECN.

It belongs to the WD repeat LIS1/nudF family.

Its subcellular location is the cytoplasm. It is found in the cytoskeleton. The protein resides in the microtubule organizing center. It localises to the centrosome. In terms of biological role, positively regulates the activity of the minus-end directed microtubule motor protein dynein. May enhance dynein-mediated microtubule sliding by targeting dynein to the microtubule plus end. Required for several dynein- and microtubule-dependent processes. This is Lissencephaly-1 homolog from Monosiga brevicollis (Choanoflagellate).